Consider the following 444-residue polypeptide: Ribosomal protein uS12 methylthiotransferase RimO (444 aa).

The region spanning 2 to 118 (PSIGLLSLGC…IVEVVNHALE (117 aa)) is the MTTase N-terminal domain. 6 residues coordinate [4Fe-4S] cluster: Cys11, Cys47, Cys81, Cys156, Cys160, and Cys163. One can recognise a Radical SAM core domain in the interval 142-372 (STPSYTAYVK…MKLQREISLS (231 aa)). The TRAM domain occupies 375 to 444 (QKRIGQEIEV…EYDLMGELAQ (70 aa)).

Belongs to the methylthiotransferase family. RimO subfamily. The cofactor is [4Fe-4S] cluster.

Its subcellular location is the cytoplasm. It catalyses the reaction L-aspartate(89)-[ribosomal protein uS12]-hydrogen + (sulfur carrier)-SH + AH2 + 2 S-adenosyl-L-methionine = 3-methylsulfanyl-L-aspartate(89)-[ribosomal protein uS12]-hydrogen + (sulfur carrier)-H + 5'-deoxyadenosine + L-methionine + A + S-adenosyl-L-homocysteine + 2 H(+). In terms of biological role, catalyzes the methylthiolation of an aspartic acid residue of ribosomal protein uS12. In Desulforamulus reducens (strain ATCC BAA-1160 / DSM 100696 / MI-1) (Desulfotomaculum reducens), this protein is Ribosomal protein uS12 methylthiotransferase RimO.